Here is a 60-residue protein sequence, read N- to C-terminus: Protein BNLF2a (60 aa).

A compositionally biased stretch (polar residues) spans 14 to 26; that stretch reads SSACGLPGSSTET. The tract at residues 14–34 is disordered; it reads SSACGLPGSSTETRPSHPCPE. Residues 41–59 traverse the membrane as a helical segment; that stretch reads LRLLLVVLCVLFGLLCLLL.

Belongs to the lymphocryptovirus BNLF2a family. As to quaternary structure, interacts with host TAP1 and TAP2.

It localises to the host endoplasmic reticulum membrane. In terms of biological role, participates in viral evasion from HLA class I-restricted T-cell immunity. Associates with host TAP1 and TAP2 and prevents TAP-mediated peptide transport and subsequent loading. The sequence is that of Protein BNLF2a from Homo sapiens (Human).